Consider the following 917-residue polypeptide: Nitrate reductase [NADH] 2 (917 aa).

The disordered stretch occupies residues 1-72; it reads MAASVDNRQY…SEDENETHNS (72 aa). A compositionally biased stretch (polar residues) spans 37–47; it reads AHQNQTTNQTV. Positions 57 to 67 are enriched in acidic residues; that stretch reads DDEDVSSEDEN. C191 lines the Mo-molybdopterin pocket. The region spanning 542–617 is the Cytochrome b5 heme-binding domain; sequence AKMYSMSEVK…LEDYRIGELI (76 aa). Heme contacts are provided by H577 and H600. The 113-residue stretch at 660–772 folds into the FAD-binding FR-type domain; that stretch reads RAKVPVQLVE…KGPLGHVEYL (113 aa). Residues 712-715, 729-733, F734, F741, 746-748, and T799 each bind FAD; these read RAYT, VVKIY, and LMS.

Belongs to the nitrate reductase family. Homodimer. The cofactor is FAD. Heme serves as cofactor. It depends on Mo-molybdopterin as a cofactor. Root, leaf, and shoot.

It carries out the reaction nitrite + NAD(+) + H2O = nitrate + NADH + H(+). In terms of biological role, nitrate reductase is a key enzyme involved in the first step of nitrate assimilation in plants, fungi and bacteria. This chain is Nitrate reductase [NADH] 2 (NIA2), found in Arabidopsis thaliana (Mouse-ear cress).